A 239-amino-acid chain; its full sequence is Peptidase E (239 aa).

Catalysis depends on charge relay system residues S122, D137, and H159.

Belongs to the peptidase S51 family.

The protein resides in the cytoplasm. The catalysed reaction is Dipeptidase E catalyzes the hydrolysis of dipeptides Asp-|-Xaa. It does not act on peptides with N-terminal Glu, Asn or Gln, nor does it cleave isoaspartyl peptides.. Hydrolyzes dipeptides containing N-terminal aspartate residues. May play a role in allowing the cell to use peptide aspartate to spare carbon otherwise required for the synthesis of the aspartate family of amino acids. This Shewanella baltica (strain OS195) protein is Peptidase E.